The primary structure comprises 44 residues: Photosystem I reaction center subunit IX (44 aa).

A helical transmembrane segment spans residues 7-27 (YLSVAPVLSTLWFASLAGLLI).

This sequence belongs to the PsaJ family.

Its subcellular location is the plastid. The protein resides in the chloroplast thylakoid membrane. Its function is as follows. May help in the organization of the PsaE and PsaF subunits. This Barbarea verna (Land cress) protein is Photosystem I reaction center subunit IX.